The primary structure comprises 321 residues: Lipoyl synthase (321 aa).

Residues Cys-68, Cys-73, Cys-79, Cys-94, Cys-98, Cys-101, and Ser-308 each contribute to the [4Fe-4S] cluster site. A Radical SAM core domain is found at Phe-80 to Thr-297.

It belongs to the radical SAM superfamily. Lipoyl synthase family. [4Fe-4S] cluster serves as cofactor.

The protein resides in the cytoplasm. It catalyses the reaction [[Fe-S] cluster scaffold protein carrying a second [4Fe-4S](2+) cluster] + N(6)-octanoyl-L-lysyl-[protein] + 2 oxidized [2Fe-2S]-[ferredoxin] + 2 S-adenosyl-L-methionine + 4 H(+) = [[Fe-S] cluster scaffold protein] + N(6)-[(R)-dihydrolipoyl]-L-lysyl-[protein] + 4 Fe(3+) + 2 hydrogen sulfide + 2 5'-deoxyadenosine + 2 L-methionine + 2 reduced [2Fe-2S]-[ferredoxin]. The protein operates within protein modification; protein lipoylation via endogenous pathway; protein N(6)-(lipoyl)lysine from octanoyl-[acyl-carrier-protein]: step 2/2. Functionally, catalyzes the radical-mediated insertion of two sulfur atoms into the C-6 and C-8 positions of the octanoyl moiety bound to the lipoyl domains of lipoate-dependent enzymes, thereby converting the octanoylated domains into lipoylated derivatives. The sequence is that of Lipoyl synthase from Sodalis glossinidius (strain morsitans).